The chain runs to 496 residues: 1-aminocyclopropane-1-carboxylate synthase 2 (496 aa).

The substrate site is built by Glu55 and Tyr93. Lys279 is subject to N6-(pyridoxal phosphate)lysine. Phosphoserine is present on residues Ser483, Ser488, and Ser491.

Belongs to the class-I pyridoxal-phosphate-dependent aminotransferase family. Homodimer and heterodimer. In vivo, the relevance of heterodimerization with other ACS enzymes is however unsure. Interacts with GRF3. It depends on pyridoxal 5'-phosphate as a cofactor. Post-translationally, phosphorylated on serine residue by MAP kinase (MPK6). In terms of processing, may be processed at its C-terminus. In terms of tissue distribution, high in developing leaves and in flowers. Expressed in roots and siliques.

The catalysed reaction is S-adenosyl-L-methionine = 1-aminocyclopropane-1-carboxylate + S-methyl-5'-thioadenosine + H(+). It participates in alkene biosynthesis; ethylene biosynthesis via S-adenosyl-L-methionine; ethylene from S-adenosyl-L-methionine: step 1/2. Its function is as follows. 1-aminocyclopropane-1-carboxylate synthase (ACS) enzymes catalyze the conversion of S-adenosyl-L-methionine (SAM) into 1-aminocyclopropane-1-carboxylate (ACC), a direct precursor of ethylene. In Arabidopsis thaliana (Mouse-ear cress), this protein is 1-aminocyclopropane-1-carboxylate synthase 2 (ACS2).